A 142-amino-acid polypeptide reads, in one-letter code: Transcriptional regulator MraZ (142 aa).

2 consecutive SpoVT-AbrB domains span residues 5–51 (ASSL…PRPE) and 77–120 (AMDV…DKAT).

Belongs to the MraZ family. As to quaternary structure, forms oligomers.

Its subcellular location is the cytoplasm. The protein localises to the nucleoid. The polypeptide is Transcriptional regulator MraZ (Variovorax paradoxus (strain S110)).